Consider the following 881-residue polypeptide: Envelope glycoprotein gp160 (881 aa).

An N-terminal signal peptide occupies residues 1 to 19 (MGCLGNQLLIAILLLSVYG). The Extracellular segment spans residues 20 to 696 (IYCTQYVTVF…ASWIKYIQYG (677 aa)). Residue N37 is glycosylated (N-linked (GlcNAc...) asparagine; by host). An intrachain disulfide couples C44 to C57. N70, N114, N148, N158, N186, N200, N204, N214, N246, N249, N280, N286, N297, N308, N318, N373, and N379 each carry an N-linked (GlcNAc...) asparagine; by host glycan. Intrachain disulfides connect C101–C222, C108–C213, C113–C170, C235–C265, and C245–C257. The V1 stretch occupies residues 113-169 (CNKSETDRWGLTKSSTTITTAAPTSAPVSEKIDMVNETSSCIAQNNCTGLEQEQMIS). The interval 170 to 213 (CKFTMTGLKRDKTKEYNETWYSTDLVCEQGNSTDNESRCYMNHC) is V2. Residues 313–345 (CRRPGNKTVLPVTIMSGLVFHSQPINDRPKQAW) are V3. Residues C313 and C346 are joined by a disulfide bond. 2 cysteine pairs are disulfide-bonded: C397–C461 and C404–C434. The V4 stretch occupies residues 404-434 (CKMNWFLNWVEDRDVTTQRPKERHRRNYVPC). 2 N-linked (GlcNAc...) asparagine; by host glycosylation sites follow: N462 and N478. The V5 stretch occupies residues 477–484 (GNQTSITM). The segment at 528-548 (GVFVLGFLGFLATAGSAMGAA) is fusion peptide. The tract at residues 591 to 607 (LQTRVTAIEKYLKDQAQ) is immunosuppression. N-linked (GlcNAc...) asparagine; by host glycosylation is found at N627, N636, and N652. Positions 636–668 (NDTWQEWERKVDFLEENITALLEEAQIQQEKNM) form a coiled coil. Residues 673–694 (KLNSWDVFGNWFDLASWIKYIQ) form an MPER; binding to GalCer region. Residues 697–717 (IYVVVGVILLRIVIYIVQMLA) form a helical membrane-spanning segment. Residues 718–881 (KLRQGYRPVF…IRQGLELTLL (164 aa)) lie on the Cytoplasmic side of the membrane. Residues 723-726 (YRPV) carry the YXXV motif; contains endocytosis signal motif. The tract at residues 737–761 (THTQQDPALPTREGKEGDGGEGGGN) is disordered. C789 carries S-palmitoyl cysteine; by host lipidation. Positions 880 to 881 (LL) match the Di-leucine internalization motif motif.

As to quaternary structure, the mature envelope protein (Env) consists of a homotrimer of non-covalently associated gp120-gp41 heterodimers. The resulting complex protrudes from the virus surface as a spike. Interacts with host CD4 and CCR5. Gp120 also interacts with the C-type lectins CD209/DC-SIGN and CLEC4M/DC-SIGNR (collectively referred to as DC-SIGN(R)). The mature envelope protein (Env) consists of a homotrimer of non-covalently associated gp120-gp41 heterodimers. The resulting complex protrudes from the virus surface as a spike. In terms of processing, specific enzymatic cleavages in vivo yield mature proteins. Envelope glycoproteins are synthesized as an inactive precursor that is heavily N-glycosylated and processed likely by host cell furin in the Golgi to yield the mature SU and TM proteins. The cleavage site between SU and TM requires the minimal sequence [KR]-X-[KR]-R. Post-translationally, palmitoylation of the transmembrane protein and of Env polyprotein (prior to its proteolytic cleavage) is essential for their association with host cell membrane lipid rafts. Palmitoylation is therefore required for envelope trafficking to classical lipid rafts, but not for viral replication.

The protein resides in the virion membrane. Its subcellular location is the host cell membrane. The protein localises to the host endosome membrane. In terms of biological role, the surface protein gp120 (SU) attaches the virus to the host lymphoid cell by binding to the primary receptor CD4. This interaction induces a structural rearrangement creating a high affinity binding site for a chemokine coreceptor like CCR5. This peculiar 2 stage receptor-interaction strategy allows gp120 to maintain the highly conserved coreceptor-binding site in a cryptic conformation, protected from neutralizing antibodies. These changes are transmitted to the transmembrane protein gp41 and are thought to activate its fusogenic potential by unmasking its fusion peptide. Functionally, surface protein gp120 (SU) may target the virus to gut-associated lymphoid tissue (GALT) by binding host ITGA4/ITGB7 (alpha-4/beta-7 integrins), a complex that mediates T-cell migration to the GALT. Interaction between gp120 and ITGA4/ITGB7 would allow the virus to enter GALT early in the infection, infecting and killing most of GALT's resting CD4+ T-cells. This T-cell depletion is believed to be the major insult to the host immune system leading to AIDS. The surface protein gp120 is a ligand for CD209/DC-SIGN and CLEC4M/DC-SIGNR, which are respectively found on dendritic cells (DCs), and on endothelial cells of liver sinusoids and lymph node sinuses. These interactions allow capture of viral particles at mucosal surfaces by these cells and subsequent transmission to permissive cells. DCs are professional antigen presenting cells, critical for host immunity by inducing specific immune responses against a broad variety of pathogens. They act as sentinels in various tissues where they take up antigen, process it, and present it to T-cells following migration to lymphoid organs. SIV subverts the migration properties of dendritic cells to gain access to CD4+ T-cells in lymph nodes. Virus transmission to permissive T-cells occurs either in trans (without DCs infection, through viral capture and transmission), or in cis (following DCs productive infection, through the usual CD4-gp120 interaction), thereby inducing a robust infection. In trans infection, bound virions remain infectious over days and it is proposed that they are not degraded, but protected in non-lysosomal acidic organelles within the DCs close to the cell membrane thus contributing to the viral infectious potential during DCs' migration from the periphery to the lymphoid tissues. On arrival at lymphoid tissues, intact virions recycle back to DCs' cell surface allowing virus transmission to CD4+ T-cells. Virion capture also seems to lead to MHC-II-restricted viral antigen presentation, and probably to the activation of SIV-specific CD4+ cells. Its function is as follows. The transmembrane protein gp41 (TM) acts as a class I viral fusion protein. Under the current model, the protein has at least 3 conformational states: pre-fusion native state, pre-hairpin intermediate state, and post-fusion hairpin state. During fusion of viral and target intracellular membranes, the coiled coil regions (heptad repeats) assume a trimer-of-hairpins structure, positioning the fusion peptide in close proximity to the C-terminal region of the ectodomain. The formation of this structure appears to drive apposition and subsequent fusion of viral and target cell membranes. Complete fusion occurs in host cell endosomes. The virus undergoes clathrin-dependent internalization long before endosomal fusion, thus minimizing the surface exposure of conserved viral epitopes during fusion and reducing the efficacy of inhibitors targeting these epitopes. Membranes fusion leads to delivery of the nucleocapsid into the cytoplasm. In terms of biological role, the envelope glycoprotein gp160 precursor down-modulates cell surface CD4 antigen by interacting with it in the endoplasmic reticulum and blocking its transport to the cell surface. Functionally, the gp120-gp41 heterodimer allows rapid transcytosis of the virus through CD4 negative cells such as simple epithelial monolayers of the intestinal, rectal and endocervical epithelial barriers. Both gp120 and gp41 specifically recognize glycosphingolipids galactosyl-ceramide (GalCer) or 3' sulfo-galactosyl-ceramide (GalS) present in the lipid rafts structures of epithelial cells. Binding to these alternative receptors allows the rapid transcytosis of the virus through the epithelial cells. This transcytotic vesicle-mediated transport of virions from the apical side to the basolateral side of the epithelial cells does not involve infection of the cells themselves. This is Envelope glycoprotein gp160 (env) from Cercopithecidae (Old World monkeys).